We begin with the raw amino-acid sequence, 203 residues long: SPbeta prophage-derived uncharacterized protein YouA (203 aa).

The tract at residues 1-23 (MAFLNQDGDKYTSAKDDGTGNPI) is disordered. Basic and acidic residues predominate over residues 7 to 18 (DGDKYTSAKDDG).

This Bacillus subtilis (strain 168) protein is SPbeta prophage-derived uncharacterized protein YouA (youA).